Consider the following 462-residue polypeptide: Cleavage and polyadenylation specificity factor subunit 7 (462 aa).

Disordered regions lie at residues 34–68 (VLTA…NKTP) and 161–213 (TRQN…PSVL). A compositionally biased stretch (pro residues) spans 50–62 (EPPPPVRQEPAPK). One can recognise an RRM domain in the interval 82–162 (AAVYVGSFSW…EKVDVRPATR (81 aa)). Positions 181-190 (HSRDSSDSAD) are enriched in basic and acidic residues. Thr194 bears the Phosphothreonine mark. Ser196 carries the post-translational modification Phosphoserine. A Glycyl lysine isopeptide (Lys-Gly) (interchain with G-Cter in SUMO2) cross-link involves residue Lys345. A disordered region spans residues 400 to 462 (SVGASGSSSR…HRDRERDRHH (63 aa)). Ser404 and Ser414 each carry phosphoserine. The arg/Ser-rich domain stretch occupies residues 409-460 (RKRHRSRERSPSRSRESSRRHRDLLHNEDRHDDYFQERNREHERHRDRERDR). 2 stretches are compositionally biased toward basic and acidic residues: residues 416–425 (ERSPSRSRES) and 432–462 (LLHN…DRHH).

It belongs to the RRM CPSF6/7 family. In terms of assembly, component of the cleavage factor Im (CFIm) complex which is a heterotetramer composed of two subunits of NUDT21/CPSF5 and two subunits of CPSF6 or CPSF7 or a heterodimer of CPSF6 and CPSF7. The cleavage factor Im (CFIm) complex associates with the CPSF and CSTF complexes to promote the assembly of the core mRNA 3'-processing machinery. Interacts with NUDT21/CPSF5. Interacts (via Arg/Ser-rich domain) with FIP1L1 (preferentially via unphosphorylated form and Arg/Glu/Asp-rich region); this interaction mediates, at least in part, the interaction between the CFIm and CPSF complexes and may be inhibited by CPSF7 hyper-phosphorylation. In terms of processing, phosphorylated. Post-translationally, asymmetrically dimethylated on arginine residues by PRMT1.

It localises to the nucleus. Its subcellular location is the cytoplasm. Component of the cleavage factor Im (CFIm) complex that functions as an activator of the pre-mRNA 3'-end cleavage and polyadenylation processing required for the maturation of pre-mRNA into functional mRNAs. CFIm contributes to the recruitment of multiprotein complexes on specific sequences on the pre-mRNA 3'-end, so called cleavage and polyadenylation signals (pA signals). Most pre-mRNAs contain multiple pA signals, resulting in alternative cleavage and polyadenylation (APA) producing mRNAs with variable 3'-end formation. The CFIm complex acts as a key regulator of cleavage and polyadenylation site choice during APA through its binding to 5'-UGUA-3' elements localized in the 3'-untranslated region (UTR) for a huge number of pre-mRNAs. CPSF7 activates directly the mRNA 3'-processing machinery. Binds to pA signals in RNA substrates. This is Cleavage and polyadenylation specificity factor subunit 7 from Rattus norvegicus (Rat).